The following is a 267-amino-acid chain: 4-hydroxy-tetrahydrodipicolinate reductase (267 aa).

Residues 8–13 (GAAGRM) and D34 contribute to the NAD(+) site. R35 provides a ligand contact to NADP(+). NAD(+) contacts are provided by residues 98-100 (GTT) and 122-125 (AANF). H155 (proton donor/acceptor) is an active-site residue. H156 contacts (S)-2,3,4,5-tetrahydrodipicolinate. The active-site Proton donor is the K159. 165-166 (GT) provides a ligand contact to (S)-2,3,4,5-tetrahydrodipicolinate.

It belongs to the DapB family.

It localises to the cytoplasm. The catalysed reaction is (S)-2,3,4,5-tetrahydrodipicolinate + NAD(+) + H2O = (2S,4S)-4-hydroxy-2,3,4,5-tetrahydrodipicolinate + NADH + H(+). It carries out the reaction (S)-2,3,4,5-tetrahydrodipicolinate + NADP(+) + H2O = (2S,4S)-4-hydroxy-2,3,4,5-tetrahydrodipicolinate + NADPH + H(+). Its pathway is amino-acid biosynthesis; L-lysine biosynthesis via DAP pathway; (S)-tetrahydrodipicolinate from L-aspartate: step 4/4. Functionally, catalyzes the conversion of 4-hydroxy-tetrahydrodipicolinate (HTPA) to tetrahydrodipicolinate. The protein is 4-hydroxy-tetrahydrodipicolinate reductase of Pseudomonas putida (strain W619).